The sequence spans 1202 residues: PAN2-PAN3 deadenylation complex catalytic subunit PAN2 (1202 aa).

WD repeat units lie at residues 153–193, 195–231, 244–280, and 328–367; these read DENE…QKYA, ETPG…VEHE, VHGN…AITP, and PVGP…SFNP. The tract at residues 368–485 is linker; it reads YSRETEFALP…VGREEEPHLH (118 aa). Positions 486–924 constitute a USP domain; the sequence is MVSKKYRKVT…VPAILYYVKR (439 aa). At S791 the chain carries Phosphoserine. One can recognise an Exonuclease domain in the interval 975–1147; sequence VGLDAEFVTL…EDARTALQLY (173 aa). A divalent metal cation contacts are provided by D978, E980, D1087, and D1139. S1189 carries the post-translational modification Phosphoserine.

Belongs to the peptidase C19 family. PAN2 subfamily. In terms of assembly, forms a heterotrimer with an asymmetric homodimer of the regulatory subunit PAN3 to form the poly(A)-nuclease (PAN) deadenylation complex. Interacts with PAN3 isoform 1/Pan3L and isoform 3/Pan3S. Interacts with ZFP36. A divalent metal cation is required as a cofactor.

It localises to the cytoplasm. It is found in the P-body. The protein resides in the nucleus. It carries out the reaction Exonucleolytic cleavage of poly(A) to 5'-AMP.. Positively regulated by the regulatory subunit PAN3. In terms of biological role, catalytic subunit of the poly(A)-nuclease (PAN) deadenylation complex, one of two cytoplasmic mRNA deadenylases involved in general and miRNA-mediated mRNA turnover. PAN specifically shortens poly(A) tails of RNA and the activity is stimulated by poly(A)-binding protein (PABP). PAN deadenylation is followed by rapid degradation of the shortened mRNA tails by the CCR4-NOT complex. Deadenylated mRNAs are then degraded by two alternative mechanisms, namely exosome-mediated 3'-5' exonucleolytic degradation, or deadenylation-dependent mRNA decaping and subsequent 5'-3' exonucleolytic degradation by XRN1. Also acts as an important regulator of the HIF1A-mediated hypoxic response. Required for HIF1A mRNA stability independent of poly(A) tail length regulation. In Homo sapiens (Human), this protein is PAN2-PAN3 deadenylation complex catalytic subunit PAN2.